The chain runs to 156 residues: 3-dehydroquinate dehydratase (156 aa).

The Proton acceptor role is filled by Tyr24. Residues Asn76, His82, and Asp89 each contribute to the substrate site. The active-site Proton donor is His102. Substrate contacts are provided by residues 103–104 (IS) and Arg113.

This sequence belongs to the type-II 3-dehydroquinase family. As to quaternary structure, homododecamer.

It carries out the reaction 3-dehydroquinate = 3-dehydroshikimate + H2O. It functions in the pathway metabolic intermediate biosynthesis; chorismate biosynthesis; chorismate from D-erythrose 4-phosphate and phosphoenolpyruvate: step 3/7. Functionally, catalyzes a trans-dehydration via an enolate intermediate. This Nitrobacter winogradskyi (strain ATCC 25391 / DSM 10237 / CIP 104748 / NCIMB 11846 / Nb-255) protein is 3-dehydroquinate dehydratase.